We begin with the raw amino-acid sequence, 538 residues long: Phosphoenolpyruvate carboxykinase (ATP) (538 aa).

Substrate is bound by residues R64, Y205, and K211. Residues K211, H230, and 246–254 (GLSGTGKTT) contribute to the ATP site. Mn(2+) is bound by residues K211 and H230. D267 serves as a coordination point for Mn(2+). ATP contacts are provided by residues E295, R331, 447 to 448 (RI), and T453. R331 provides a ligand contact to substrate.

This sequence belongs to the phosphoenolpyruvate carboxykinase (ATP) family. Monomer. The cofactor is Mn(2+).

The protein resides in the cytoplasm. It catalyses the reaction oxaloacetate + ATP = phosphoenolpyruvate + ADP + CO2. Its pathway is carbohydrate biosynthesis; gluconeogenesis. Involved in the gluconeogenesis. Catalyzes the conversion of oxaloacetate (OAA) to phosphoenolpyruvate (PEP) through direct phosphoryl transfer between the nucleoside triphosphate and OAA. The sequence is that of Phosphoenolpyruvate carboxykinase (ATP) from Haemophilus influenzae (strain ATCC 51907 / DSM 11121 / KW20 / Rd).